The primary structure comprises 376 residues: 2-aminoethylphosphonate--pyruvate transaminase 2 (376 aa).

At K194 the chain carries N6-(pyridoxal phosphate)lysine.

The protein belongs to the class-V pyridoxal-phosphate-dependent aminotransferase family. PhnW subfamily. As to quaternary structure, homodimer. Pyridoxal 5'-phosphate is required as a cofactor.

It carries out the reaction (2-aminoethyl)phosphonate + pyruvate = phosphonoacetaldehyde + L-alanine. Involved in phosphonate degradation. In Burkholderia lata (strain ATCC 17760 / DSM 23089 / LMG 22485 / NCIMB 9086 / R18194 / 383), this protein is 2-aminoethylphosphonate--pyruvate transaminase 2.